A 529-amino-acid polypeptide reads, in one-letter code: Probable serine/threonine protein phosphatase 2A regulatory subunit B''epsilon (529 aa).

The segment at 60-110 (KSGTPTNKSKNLPSVFLSSSTPPLSPRSSSGSPRFSRQRTSPPSLHSPLRS) is disordered. Positions 71-109 (LPSVFLSSSTPPLSPRSSSGSPRFSRQRTSPPSLHSPLR) are enriched in low complexity. One can recognise an EF-hand domain in the interval 381–416 (SSEPSLEYWFKCVDLDGNGVITSNEMQFFFEEQLHR). Ca(2+) contacts are provided by Asp394, Asp396, Asn398, and Glu405. A disordered region spans residues 507–529 (EEDVDEVSNGSADVWDEPLEPPF). Positions 520–529 (VWDEPLEPPF) are enriched in acidic residues.

As to quaternary structure, PP2A consists of a common heterodimeric core enzyme, composed of a 36 kDa catalytic subunit (subunit C) and a 65 kDa constant regulatory subunit (PR65 or subunit A), that associates with a variety of regulatory subunits. Proteins that associate with the core dimer include three families of regulatory subunits B (the R2/B/PR55/B55, R3/B''/PR72/PR130/PR59 and R5/B'/B56 families) and cell signaling molecules.

Functionally, probable regulatory subunit of type 2A protein phosphatase. The chain is Probable serine/threonine protein phosphatase 2A regulatory subunit B''epsilon (B''EPSILON) from Arabidopsis thaliana (Mouse-ear cress).